The chain runs to 301 residues: MGDDIGTAGVPAFYCCYLLRSIPKRLSYYIGSTPNPVRRLRQHNGLLTKGGAYRTKRQGTRPWELAASVSGFPSKIAALQFEHAWQHPYQTRFIKSEDRIVKKKGGGRSIHQRLAVLKLLLHHPFFKVMSLVVHLFSEDIQRVWFLDKYKLEAPFIHVEVDEDALSEPTGEDEESVIEHAKKNLRLVELFYGRSLKEDSECLEEYRRRLQNGAMRCAICEKIVDYVKDSDSFSSEKELVAFCYNSVCDYFSCLSCLYNVFASDEELRTGEIPLIPTSGQCPNCNIELSWARIVRYSMFLSA.

One can recognise a GIY-YIG domain in the interval 12–95 (AFYCCYLLRS…QHPYQTRFIK (84 aa)). Residues 216–283 (CAICEKIVDY…IPTSGQCPNC (68 aa)) form an SLX1-type zinc finger.

The protein belongs to the SLX1 family. As to quaternary structure, forms a heterodimer with SLX4. Requires a divalent metal cation as cofactor.

Its subcellular location is the nucleus. In terms of biological role, catalytic subunit of the SLX1-SLX4 structure-specific endonuclease that resolves DNA secondary structures generated during DNA repair and recombination. Has endonuclease activity towards branched DNA substrates, introducing single-strand cuts in duplex DNA close to junctions with ss-DNA. The protein is Structure-specific endonuclease subunit SLX1 of Eremothecium gossypii (strain ATCC 10895 / CBS 109.51 / FGSC 9923 / NRRL Y-1056) (Yeast).